The sequence spans 249 residues: Small ribosomal subunit protein eS6 (249 aa).

Over residues 216–229 (RMKEAKEKRQEQIA) the composition is skewed to basic and acidic residues. The segment at 216–249 (RMKEAKEKRQEQIAKRRRLSSLRASTSKSESSQK) is disordered. 5 positions are modified to phosphoserine: serine 235, serine 236, serine 240, serine 244, and serine 247. Residues 236–249 (SLRASTSKSESSQK) show a composition bias toward low complexity.

This sequence belongs to the eukaryotic ribosomal protein eS6 family. In terms of assembly, component of the small ribosomal subunit. In terms of processing, ribosomal protein S6 is the major substrate of protein kinases in eukaryote ribosomes. The phosphorylation is stimulated by growth factors, tumor promoting agents, and mitogens. It is dephosphorylated at growth arrest.

The protein localises to the cytoplasm. In terms of biological role, component of the 40S small ribosomal subunit. Plays an important role in controlling cell growth and proliferation through the selective translation of particular classes of mRNA. In Oncorhynchus mykiss (Rainbow trout), this protein is Small ribosomal subunit protein eS6 (rps6).